Reading from the N-terminus, the 543-residue chain is MRRFVIGQAKNLIDQSRRRQLHHHKNLSFVSLIPPFSAPSDSSSRHLSSSSSSDMSASDSSSSLPVTLDTINPKVIKCEYAVRGEIVNIAQKLQEDLKTNKDAYPFDEIIYCNIGNPQSLGQQPITFFREVLALCSYTALLDESATHGLFSSDSIERAWKILDQIPGRATGAYSHSQGIKGLRDAIADGIEARDGFPADPNDIFMTDGASPGVHMMMQLLITSEKDGILCPIPQYPLYSASIALHGGTLVPYYLDEASGWGLEISELKKQLEDARSKGITVRALAVINPGNPTGQVLSEENQRDVVKFCKQEGLVLLADEVYQENVYVPDKKFHSFKKVARSMGYGEKDLALVSFQSVSKGYYGECGKRGGYMEVTGFTSDVREQIYKMASVNLCSNISGQILASLIMSPPKPGDDSYESYIAEKDGILSSLARRAKTLEEALNKLEGVTCNRAEGAMYLFPCLHLPQKAIAAAEAEKTAPDNFYCKRLLKATGIVVVPGSGFRQVPGTWHFRCTILPQEDKIPAIVDRLTAFHQSFMDEFRD.

The transit peptide at 1-55 (MRRFVIGQAKNLIDQSRRRQLHHHKNLSFVSLIPPFSAPSDSSSRHLSSSSSSDM) directs the protein to the mitochondrion. Residues 43–63 (SSRHLSSSSSSDMSASDSSSS) show a composition bias toward low complexity. The tract at residues 43–64 (SSRHLSSSSSSDMSASDSSSSL) is disordered. Ser-56 carries the post-translational modification N-acetylserine. Pyridoxal 5'-phosphate is bound by residues Tyr-173, 209 to 210 (AS), Tyr-235, Asn-291, Tyr-322, and 354 to 356 (SFQ). Lys-360 bears the N6-(pyridoxal phosphate)lysine mark. Pyridoxal 5'-phosphate contacts are provided by Arg-369 and Asn-397.

Belongs to the class-I pyridoxal-phosphate-dependent aminotransferase family. Alanine aminotransferase subfamily. As to quaternary structure, homodimer. The cofactor is pyridoxal 5'-phosphate. The N-terminus is blocked. Mostly expressed in roots and shoots, mostly in vascular tissues, and, to a lower extent, in flowers and leaves.

It is found in the mitochondrion. The enzyme catalyses L-alanine + 2-oxoglutarate = pyruvate + L-glutamate. It functions in the pathway photosynthesis; C4 acid pathway. The protein operates within amino-acid degradation; L-alanine degradation via transaminase pathway; pyruvate from L-alanine: step 1/1. In terms of biological role, is the major alanine aminotransferase in roots that catalyzes the conversion of alanine to pyruvate. Involved in the rapid conversion of alanine to pyruvate during recovery from low-oxygen stress. This is Alanine aminotransferase 1, mitochondrial from Arabidopsis thaliana (Mouse-ear cress).